A 2625-amino-acid chain; its full sequence is Highly reducing polyketide synthase frbB (2625 aa).

Residues 1–10 (MRNIDEHMSE) are compositionally biased toward basic and acidic residues. A disordered region spans residues 1 to 25 (MRNIDEHMSERATLQSSGGYGERDS). In terms of domain architecture, Ketosynthase family 3 (KS3) spans 27-449 (VEPIAIIGMS…GTNAHVILDR (423 aa)). Catalysis depends on for beta-ketoacyl synthase activity residues C200, H334, and H375. The segment at 563–883 (YVFSGQGAQY…DAASTLLTTI (321 aa)) is malonyl-CoA:ACP transacylase (MAT) domain. The tract at residues 942–1080 (HELLGNMSTD…GRIRAVLDDS (139 aa)) is N-terminal hotdog fold. The interval 942–1252 (HELLGNMSTD…GMILAKLPGG (311 aa)) is dehydratase (DH) domain. The PKS/mFAS DH domain occupies 942–1255 (HELLGNMSTD…LAKLPGGTSR (314 aa)). The active-site Proton acceptor; for dehydratase activity is H974. Positions 1102 to 1255 (VRFVSPSAFY…LAKLPGGTSR (154 aa)) are C-terminal hotdog fold. Residue D1167 is the Proton donor; for dehydratase activity of the active site. Residues 1490–1673 (YHQIKAYIAE…GFVDTEPVFR (184 aa)) form a methyltransferase (CMet) domain region. Residues 1907-2220 (GLLETFHWKP…SGKHIGKVIL (314 aa)) are enoyl reductase (ER) domain. Residues 2261 to 2439 (AVYIVVGGLG…GYSINIGPVS (179 aa)) are ketoreductase (KR) domain. The Carrier domain maps to 2542–2619 (GAEAAVLTAI…HLARLAAEES (78 aa)). S2579 is modified (O-(pantetheine 4'-phosphoryl)serine).

It participates in antifungal biosynthesis. In terms of biological role, highly reducing polyketide synthase; part of the gene cluster that mediates the biosynthesis of the antifungal antibiotic FR901469, an inhibitor of beta-1,3-glucansynthase, exerting antifungal activity against the pathogenes Candida albicans and Aspergillus fumigatus. FR901469 is a cyclic depsipeptide containing 12 amino acid residues and a fatty acid chain. The NRPS frbI contains 12 modules responsible for the formation of the depsipeptide backbone which is denoted as Acyl-Thr-Ala-Tyr-Val-4OHPro-Thr-Thr-3OHPro-threo3OHGln-Gly-Thr-Orn-OH (C71H116N14O23). The PKS frbB is probably involved in the production of the hydrocarbon chain, and the acyl-CoA ligase frbC might be involved in the transport of the chain to the peptide ptoduct of frbI. Because FR901469 contains 3 hydroxylated amino acid residues, the 3 oxygenases frbA, frbH, and frbJ might be participating in amino acid hydroxylation. As no thioesterase domains were detected in frbI or frbB, the thioesterases frbD and frbE may instead release and cyclize the products of the NRPS and PKS, respectively. The sequence is that of Highly reducing polyketide synthase frbB from Dothideomycetidae sp. (strain 11243) (Fungal sp. (strain No.11243)).